The chain runs to 456 residues: MDSRLQEIRERQKLRRQLLAQQLGAESADSIGAVLNSKDEQREIAETRETCRASYDTSAPNAKRKYLDEGETDEDKMEEYKDELEMQQDEENLPYEEEIYKDSSTFLKGTQSLNPHNDYCQHFVDTGHRPQNFIRDVGLADRFEEYPKLRELIRLKDELIAKSNTPPMYLQADIEAFDIRELTPKFDVILLEPPLEEYYRETGITANEKCWTWDDIMKLEIDEIAAPRSFIFLWCGSGEGLDLGRVCLRKWGYRRCEDICWIKTNKNNPGKTKTLDPKAVFQRTKEHCLMGIKGTVKRSTDGDFIHANVDIDLIITEEPEIGNIEKPVEIFHIIEHFCLGRRRLHLFGRDSTIRPGWLTVGPTLTNSNYNAETYASYFSAPNSYLTGCTEEIERLRPKSPPPKSKSDRGGGAPRGGGRGGTSAGRGRERNRSNFRGERGGFRGGRGGAHRGGFPPR.

The interval 50 to 75 (TCRASYDTSAPNAKRKYLDEGETDED) is disordered. 2 interaction with METTL3 regions span residues 135-136 (RD) and 237-238 (SG). The interval 245–254 (RVCLRKWGYR) is positively charged region required for RNA-binding. Interaction with METTL3 regions lie at residues 255–258 (RCED) and 278–287 (KAVFQRTKEH). Residues 297-298 (KR) form a positively charged region required for RNA-binding region. The interval 308–312 (NVDID) is interaction with METTL3. The interval 393–456 (ERLRPKSPPP…GAHRGGFPPR (64 aa)) is disordered. Serine 399 carries the phosphoserine modification. A compositionally biased stretch (gly residues) spans 409–423 (GGGAPRGGGRGGTSA). Positions 425 to 440 (RGRERNRSNFRGERGG) are enriched in basic and acidic residues. The segment covering 441-450 (FRGGRGGAHR) has biased composition (gly residues).

It belongs to the MT-A70-like family. As to quaternary structure, heterodimer; heterodimerizes with METTL3 to form an antiparallel heterodimer that constitutes an active methyltransferase. Component of the WMM complex, a N6-methyltransferase complex composed of a catalytic subcomplex, named MAC, and of an associated subcomplex, named MACOM. The MAC subcomplex is composed of METTL3 and METTL14. The MACOM subcomplex is composed of WTAP, ZC3H13, CBLL1/HAKAI, VIRMA, and, in some cases of RBM15 (RBM15 or RBM15B).

The protein resides in the nucleus. Its function is as follows. The METTL3-METTL14 heterodimer forms a N6-methyltransferase complex that methylates adenosine residues at the N(6) position of some mRNAs and regulates the circadian clock, differentiation of embryonic stem cells and cortical neurogenesis. In the heterodimer formed with METTL3, METTL14 constitutes the RNA-binding scaffold that recognizes the substrate rather than the catalytic core. N6-methyladenosine (m6A), which takes place at the 5'-[AG]GAC-3' consensus sites of some mRNAs, plays a role in mRNA stability and processing. M6A acts as a key regulator of mRNA stability by promoting mRNA destabilization and degradation. In embryonic stem cells (ESCs), m6A methylation of mRNAs encoding key naive pluripotency-promoting transcripts results in transcript destabilization. M6A regulates spermatogonial differentiation and meiosis and is essential for male fertility and spermatogenesis. M6A also regulates cortical neurogenesis: m6A methylation of transcripts related to transcription factors, neural stem cells, the cell cycle and neuronal differentiation during brain development promotes their destabilization and decay, promoting differentiation of radial glial cells. The chain is N(6)-adenosine-methyltransferase non-catalytic subunit METTL14 from Homo sapiens (Human).